A 265-amino-acid polypeptide reads, in one-letter code: Protein IL-40 (265 aa).

An N-terminal signal peptide occupies residues 1-20 (MGLPGLFCLAVLAASSFSKA). N-linked (GlcNAc...) asparagine glycosylation is found at Asn86 and Asn132.

As to expression, expressed in fetal liver and bone marrow. Expressed in peripheral blood lymphocyte B cells.

The protein localises to the secreted. In terms of biological role, probable B cell-associated cytokine that plays a role in the regulation of humoral immune responses. Involved in lymphocyte B cell development and immunoglobulin/IgA production. This chain is Protein IL-40, found in Homo sapiens (Human).